The primary structure comprises 627 residues: Dual specificity testis-specific protein kinase 1 (627 aa).

Residues 1–36 form a disordered region; sequence MAGERPPLRGPGPGEAPGEGPGGAGGGPGRGRPSSY. A compositionally biased stretch (gly residues) spans 11–30; sequence PGPGEAPGEGPGGAGGGPGR. The Protein kinase domain maps to 52–309; the sequence is FDCAEKIGAG…TEITQHLEQI (258 aa). ATP contacts are provided by residues 58-66 and K81; that span reads IGAGFFSEV. The Proton acceptor role is filled by D170. S215 carries the post-translational modification Phosphoserine; by autocatalysis. Positions 316–330 are enriched in low complexity; the sequence is ATPLAKPPLTKAPLT. Disordered stretches follow at residues 316 to 373, 436 to 485, 500 to 519, and 532 to 565; these read ATPL…SWGD, RCRS…GLAP, CSSA…NNNP, and REPW…EPEE. R338 carries the omega-N-methylarginine modification. The segment covering 348-357 has biased composition (basic and acidic residues); sequence PDPRLSRSRS. Residues 421–525 form a required for interaction with YWHAB region; it reads VTTPDILVQP…NNNPPAVVVN (105 aa). A required for interaction with PARVA region spans residues 528–625; sequence QGWAREPWNR…PTPSLQLPGA (98 aa). The tract at residues 528–627 is required for interaction with SPRED1 and SPRY2. Required for TESK1-mediated dephosphorylation of SPRY2 and SPRY2 inhibition of ERK phosphorylation; it reads QGWAREPWNR…PSLQLPGARS (100 aa).

It belongs to the protein kinase superfamily. TKL Ser/Thr protein kinase family. Interacts (via both C- and N-termini) with SPRY4 (via C-terminus); the interaction inhibits TESK1 kinase activity. Interacts with TAOK1; the interaction inhibits TAOK1 kinase activity. Interacts (via C-terminus) with SPRED1 (via C-terminus); the interaction inhibits TESK1 kinase activity. Interacts (via C-terminus) with PARVA/PARVIN (via C-terminus); the interaction inhibits TESK1 kinase activity. Interacts with YWHAB/14-3-3 beta; the interaction is dependent on the phosphorylation of TESK1 Ser-439 and inhibits TESK1 kinase activity. Interacts with SPRY1, SPRY3 and SPRED2. Interacts (via C-terminus) with SPRY2 (via C-terminus); the interaction disrupts SPRY2 interaction with PPP2CA/PP2A-C, possibly by vesicular sequestration of SPRY2. Therefore dephosphorylation of SPRY2 by the serine/threonine-protein phosphatase 2A (PP2A) holoenzyme is lost, inhibiting its interaction with GRB2. It depends on Mg(2+) as a cofactor. Mn(2+) is required as a cofactor. Autophosphorylated on serine and tyrosine residues. As to expression, expressed in testes and brain (at protein level).

It is found in the cytoplasm. Its subcellular location is the perinuclear region. The protein localises to the cytoskeleton. The protein resides in the microtubule organizing center. It localises to the centrosome. It is found in the cell projection. Its subcellular location is the lamellipodium. The enzyme catalyses L-seryl-[protein] + ATP = O-phospho-L-seryl-[protein] + ADP + H(+). It carries out the reaction L-threonyl-[protein] + ATP = O-phospho-L-threonyl-[protein] + ADP + H(+). The catalysed reaction is L-tyrosyl-[protein] + ATP = O-phospho-L-tyrosyl-[protein] + ADP + H(+). With respect to regulation, activated by autophosphorylation on Ser-215. Kinase activity is inhibited by SPRED1. Dual specificity protein kinase activity catalyzing autophosphorylation and phosphorylation of exogenous substrates on both serine/threonine and tyrosine residues. Regulates the cellular cytoskeleton by enhancing actin stress fiber formation via phosphorylation of cofilin and by preventing microtubule breakdown via inhibition of TAOK1/MARKK kinase activity. Inhibits podocyte motility via regulation of actin cytoskeletal dynamics and phosphorylation of CFL1. Positively regulates integrin-mediated cell spreading, via phosphorylation of cofilin. Suppresses ciliogenesis via multiple pathways; phosphorylation of CFL1, suppression of ciliary vesicle directional trafficking to the ciliary base, and by facilitating YAP1 nuclear localization where it acts as a transcriptional corepressor of the TEAD4 target genes AURKA and PLK1. Probably plays a central role at and after the meiotic phase of spermatogenesis. This Mus musculus (Mouse) protein is Dual specificity testis-specific protein kinase 1 (Tesk1).